The primary structure comprises 129 residues: MAKEATRVRRRERKNIVSGVAHVNSTFNNTMITITDAQGNTISWSSAGMMGFKGSRKSTPYAAQMAAEDCARKAVEHGMRTLEVEVSGPGSGRESALRALQAAGFTVTSIRDVTPIPHNGCRPRKRRRV.

It belongs to the universal ribosomal protein uS11 family. As to quaternary structure, part of the 30S ribosomal subunit. Interacts with proteins S7 and S18. Binds to IF-3.

Functionally, located on the platform of the 30S subunit, it bridges several disparate RNA helices of the 16S rRNA. Forms part of the Shine-Dalgarno cleft in the 70S ribosome. The polypeptide is Small ribosomal subunit protein uS11 (Beijerinckia indica subsp. indica (strain ATCC 9039 / DSM 1715 / NCIMB 8712)).